Here is a 548-residue protein sequence, read N- to C-terminus: 2-succinyl-5-enolpyruvyl-6-hydroxy-3-cyclohexene-1-carboxylate synthase (548 aa).

The protein belongs to the TPP enzyme family. MenD subfamily. In terms of assembly, homodimer. It depends on Mg(2+) as a cofactor. The cofactor is Mn(2+). Thiamine diphosphate serves as cofactor.

It carries out the reaction isochorismate + 2-oxoglutarate + H(+) = 5-enolpyruvoyl-6-hydroxy-2-succinyl-cyclohex-3-ene-1-carboxylate + CO2. Its pathway is quinol/quinone metabolism; 1,4-dihydroxy-2-naphthoate biosynthesis; 1,4-dihydroxy-2-naphthoate from chorismate: step 2/7. It functions in the pathway quinol/quinone metabolism; menaquinone biosynthesis. Catalyzes the thiamine diphosphate-dependent decarboxylation of 2-oxoglutarate and the subsequent addition of the resulting succinic semialdehyde-thiamine pyrophosphate anion to isochorismate to yield 2-succinyl-5-enolpyruvyl-6-hydroxy-3-cyclohexene-1-carboxylate (SEPHCHC). This chain is 2-succinyl-5-enolpyruvyl-6-hydroxy-3-cyclohexene-1-carboxylate synthase, found in Mycolicibacterium vanbaalenii (strain DSM 7251 / JCM 13017 / BCRC 16820 / KCTC 9966 / NRRL B-24157 / PYR-1) (Mycobacterium vanbaalenii).